A 124-amino-acid polypeptide reads, in one-letter code: uncharacterized protein (124 aa).

The disordered stretch occupies residues 44–92 (DRVENSGNGTGSISAPLTDLGPSIGDSHENKGADIPIHPPLDTQSHAKD). Residues 48-58 (NSGNGTGSISA) show a composition bias toward polar residues.

This is an uncharacterized protein from Caenorhabditis elegans.